The following is a 212-amino-acid chain: Golgi SNAP receptor complex member 2 (212 aa).

Methionine 1 carries the post-translational modification N-acetylmethionine. The Cytoplasmic segment spans residues 1–190 (MDPLFQQTHK…LIEKRAFQDK (190 aa)). The stretch at 61–107 (NKRQNARLRVDQLKYDVQHLQTALRNFQHRRHAREQQERQREELLSR) forms a coiled coil. The IxM motif; signal for cargo packaging into COPII-coated vesicles motif lies at 118-120 (IPM). The helical; Anchor for type IV membrane protein transmembrane segment at 191–211 (YFMIGGMLLTCVVMFLVVQYL) threads the bilayer. Residue threonine 212 is a topological domain, vesicular.

This sequence belongs to the GOSR2 family. In terms of assembly, part of a unique SNARE complex composed of the Golgi SNAREs GOSR1, STX5 and YKT6. Interacts (via IxM motif) with SEC24C and SEC24D; mediates GOSR2 packaging into COPII-coated vesicles. Interacts with BET1.

The protein localises to the golgi apparatus. Its subcellular location is the cis-Golgi network membrane. The protein resides in the golgi apparatus membrane. It localises to the endoplasmic reticulum membrane. Its function is as follows. Involved in transport of proteins from the cis/medial-Golgi to the trans-Golgi network. The polypeptide is Golgi SNAP receptor complex member 2 (GOSR2) (Homo sapiens (Human)).